The primary structure comprises 326 residues: Undecaprenyl-phosphate 4-deoxy-4-formamido-L-arabinose transferase (326 aa).

2 helical membrane passes run 236–256 and 270–290; these read LSVVGSVIAVAGFLLAVLLIV and VFTLFAILFMFIGAQFVAMGL.

The protein belongs to the glycosyltransferase 2 family.

It is found in the cell inner membrane. The catalysed reaction is UDP-4-deoxy-4-formamido-beta-L-arabinose + di-trans,octa-cis-undecaprenyl phosphate = 4-deoxy-4-formamido-alpha-L-arabinopyranosyl di-trans,octa-cis-undecaprenyl phosphate + UDP. The protein operates within glycolipid biosynthesis; 4-amino-4-deoxy-alpha-L-arabinose undecaprenyl phosphate biosynthesis; 4-amino-4-deoxy-alpha-L-arabinose undecaprenyl phosphate from UDP-4-deoxy-4-formamido-beta-L-arabinose and undecaprenyl phosphate: step 1/2. It participates in bacterial outer membrane biogenesis; lipopolysaccharide biosynthesis. Catalyzes the transfer of 4-deoxy-4-formamido-L-arabinose from UDP to undecaprenyl phosphate. The modified arabinose is attached to lipid A and is required for resistance to polymyxin and cationic antimicrobial peptides. The sequence is that of Undecaprenyl-phosphate 4-deoxy-4-formamido-L-arabinose transferase from Proteus mirabilis (strain HI4320).